Here is a 193-residue protein sequence, read N- to C-terminus: Anthranilate synthase component 2 (193 aa).

The 191-residue stretch at 3–193 (NILFLDNFDS…QQSIEWLLNR (191 aa)) folds into the Glutamine amidotransferase type-1 domain. 57–59 (GPG) contributes to the L-glutamine binding site. C84 serves as the catalytic Nucleophile; for GATase activity. Residues Q88 and 134–135 (SL) each bind L-glutamine. Residues H170 and E172 each act as for GATase activity in the active site.

In terms of assembly, heterotetramer consisting of two non-identical subunits: a beta subunit (TrpG) and a large alpha subunit (TrpE).

The catalysed reaction is chorismate + L-glutamine = anthranilate + pyruvate + L-glutamate + H(+). Its pathway is amino-acid biosynthesis; L-tryptophan biosynthesis; L-tryptophan from chorismate: step 1/5. Part of a heterotetrameric complex that catalyzes the two-step biosynthesis of anthranilate, an intermediate in the biosynthesis of L-tryptophan. In the first step, the glutamine-binding beta subunit (TrpG) of anthranilate synthase (AS) provides the glutamine amidotransferase activity which generates ammonia as a substrate that, along with chorismate, is used in the second step, catalyzed by the large alpha subunit of AS (TrpE) to produce anthranilate. In the absence of TrpG, TrpE can synthesize anthranilate directly from chorismate and high concentrations of ammonia. This Haemophilus influenzae (strain ATCC 51907 / DSM 11121 / KW20 / Rd) protein is Anthranilate synthase component 2 (trpG).